Consider the following 273-residue polypeptide: Holocytochrome c-type synthase (273 aa).

Low complexity predominate over residues 1–18; it reads MGLSASSPAATAQSAAEP. The segment at 1 to 39 is disordered; sequence MGLSASSPAATAQSAAEPSKQHQVASPPSECPMHQEKMR. HRM repeat units follow at residues 30 to 35 and 40 to 45; these read ECPMHQ and GCPMHM.

This sequence belongs to the cytochrome c-type heme lyase family.

The protein localises to the mitochondrion inner membrane. It carries out the reaction holo-[cytochrome c] = apo-[cytochrome c] + heme b. Its function is as follows. Lyase that catalyzes the covalent linking of the heme group to the cytochrome C apoprotein to produce the mature functional cytochrome. In Gallus gallus (Chicken), this protein is Holocytochrome c-type synthase (HCCS).